A 1576-amino-acid polypeptide reads, in one-letter code: Disco-interacting protein 2 homolog B (1576 aa).

Serine 9, serine 50, and serine 53 each carry phosphoserine. In terms of domain architecture, DMAP1-binding spans 12–131; sequence AVAALPPEVR…PMPTKRRSTF (120 aa). A disordered region spans residues 31-167; it reads LSEGDITQKG…AALSAALQQS (137 aa). The segment covering 52-62 has biased composition (polar residues); sequence YSPQTQETDSA. The span at 70–83 shows a compositional bias: low complexity; sequence QTPAPSAAQTSAPS. Threonine 71 is subject to Phosphothreonine. The span at 92 to 104 shows a compositional bias: basic and acidic residues; sequence GARDERYRSDIHT. Phosphoserine is present on serine 100. Phosphothreonine is present on threonine 140. Residues serine 146, serine 148, and serine 153 each carry the phosphoserine modification. Residues 155–167 are compositionally biased toward low complexity; it reads RRQAALSAALQQS. Residues serine 178, serine 193, and serine 203 each carry the phosphoserine modification. The disordered stretch occupies residues 179 to 201; sequence IQGSSTSSSASSTLSHGEVKGTS. The span at 182–193 shows a compositional bias: low complexity; that stretch reads SSTSSSASSTLS. The segment at 217–246 is disordered; the sequence is SAPPDVTTTTSSSSSSSSIRPANIDLPPSG. The segment covering 223–234 has biased composition (low complexity); that stretch reads TTTTSSSSSSSS. Serine 259 is subject to Phosphoserine.

Belongs to the DIP2 family. Interacts with alpha-tubulin. In terms of tissue distribution, moderately expressed in adult brain, placenta, skeletal muscle, heart, kidney, pancreas, lung, spleen and colon. Expression was weaker in adult liver, kidney, spleen, and ovary, and in fetal brain and liver. In the brain, it is expressed in the cerebral cortex; the frontal, parietal, occipital and temporal lobes; the paracentral gyrus; the pons; the corpus callosum and the hippocampus. Highest expression levels in the brain were found in the cerebral cortex and the frontal and parietal lobes.

The protein localises to the cell projection. The protein resides in the dendrite. It is found in the axon. Its subcellular location is the perikaryon. Functionally, negatively regulates axonal outgrowth and is essential for normal synaptic transmission. Not required for regulation of axon polarity. Promotes acetylation of alpha-tubulin. This is Disco-interacting protein 2 homolog B (DIP2B) from Homo sapiens (Human).